The primary structure comprises 579 residues: Mycobactin import ATP-binding/permease protein IrtB (579 aa).

Topologically, residues 1-25 (MIRTLLRLVPAEKRGAVAGYAVLTL) are cytoplasmic. Positions 21 to 299 (AVLTLLSVLL…IADLAPALET (279 aa)) constitute an ABC transmembrane type-1 domain. A helical membrane pass occupies residues 26 to 46 (LSVLLRAVGAVLLIPLLAALF). Residues 47–48 (SD) lie on the Periplasmic side of the membrane. A helical transmembrane segment spans residues 49 to 69 (TPSDAWLWLGWLTAVTLAGWV). The Cytoplasmic portion of the chain corresponds to 70-126 (TDTNTARLGFDLGFAVLSRTQHDMADRLPNVAMSWFTPDNTATARQAIAATGPELAG). A run of 2 helical transmembrane segments spans residues 127-147 (LVVNLLTPLIGAALLPAAIGV) and 148-168 (ALLFVSVPLGLAALAGVAVLF). At 169–241 (GALALSGRLS…RLLTMQIPGQ (73 aa)) the chain is on the cytoplasmic side. A helical transmembrane segment spans residues 242–262 (VLFSLAGQVALIGFAGMAVWL). The Periplasmic portion of the chain corresponds to 263 to 272 (TVRGQLGVPE). A helical membrane pass occupies residues 273–293 (AIALIVVLVRYLEPFAAIADL). Residues 294–579 (APALETTRAT…SEWAIGSTAR (286 aa)) are Cytoplasmic-facing. The region spanning 332-565 (IEFDDVRFSY…GGRFAQFWAQ (234 aa)) is the ABC transporter domain. 364-371 (GPSGSGKT) contacts ATP.

This sequence belongs to the ABC transporter superfamily. Siderophore-Fe(3+) uptake transporter (SIUT) (TC 3.A.1.21) family. As to quaternary structure, forms a heterodimer with IrtA.

The protein resides in the cell inner membrane. Its activity is regulated as follows. The ATPase activity of IrtAB is stimulated more than 38-fold in the presence of Fe-MBT, and more than 10-fold in the presence of Fe-cMBT. Its function is as follows. Part of the ABC transporter complex IrtAB involved in the import of iron-bound mycobactin (Fe-MBT) and carboxymycobactin (Fe-cMBT). Has a preference for Fe-MBT over Fe-cMBT. Transmembrane domains (TMD) form a pore in the membrane and the ATP-binding domain (NBD) is responsible for energy generation. The polypeptide is Mycobactin import ATP-binding/permease protein IrtB (Mycolicibacterium thermoresistibile (strain ATCC 19527 / DSM 44167 / CIP 105390 / JCM 6362 / NCTC 10409 / 316) (Mycobacterium thermoresistibile)).